Here is a 439-residue protein sequence, read N- to C-terminus: MSEYKYLSGFGSHFSSEDERYPNSLPVGQNSPQVCPYKLYAEQLSGSAFTAPRTENMRTWLYRKLPSAAHLPFQPFKGAEYFSQNWDEQPPNPNQLRWKPFDLPPKDGKNVNFVEGLHTVCGAGDPRSRHGLAIHIYSCNGSMDNSAFYNSDGDFLIVPQQGVLDITTEFGRMSVAPNEICVIPQGIRFAVNVDSPSRGYILEVYDDHFVLPDLGPIGANGLANPRDFETPVAWFDDRDVKDFQVISKFQGRLFVAKQNHTVFDVVAWHGNYVPFKYDLSKFMVINSVSFDHCDPSIFTVLTCPSLRAGTAIADFVIFPPRWSVQEHTFRPPYYHRNCMSEFMGLILGKYEAKEDGFAAGGATLHSMMTPHGPDVKCFEGASNAKLVPERVAEGTQAFMFESSLSLAVTKWGEETCQKLDAAYYECWQALKNNFQITKN.

Fe cation contacts are provided by His-335, Glu-341, and His-371.

This sequence belongs to the homogentisate dioxygenase family. Fe cation is required as a cofactor.

It carries out the reaction homogentisate + O2 = 4-maleylacetoacetate + H(+). The protein operates within amino-acid degradation; L-phenylalanine degradation; acetoacetate and fumarate from L-phenylalanine: step 4/6. The chain is Homogentisate 1,2-dioxygenase from Drosophila melanogaster (Fruit fly).